The chain runs to 214 residues: Charged multivesicular body protein 2b (214 aa).

Residues 25-55 (QRTITRDRAALEKQERQLELEIKKMAKTGNK) adopt a coiled-coil conformation. Positions 179-201 (AKAPSAARGLPSASTSKASTISD) are disordered. A compositionally biased stretch (polar residues) spans 190-199 (SASTSKASTI). The MIT-interacting motif signature appears at 202 to 212 (EEIERQLKALG).

The protein belongs to the SNF7 family. Probable core component of the endosomal sorting required for transport complex III (ESCRT-III). ESCRT-III components are thought to multimerize to form a flat lattice on the perimeter membrane of the endosome.

It is found in the cytoplasm. The protein localises to the cytosol. Its subcellular location is the late endosome membrane. Its function is as follows. Probable core component of the endosomal sorting required for transport complex III (ESCRT-III) which is involved in multivesicular bodies (MVBs) formation and sorting of endosomal cargo proteins into MVBs. MVBs contain intraluminal vesicles (ILVs) that are generated by invagination and scission from the limiting membrane of the endosome and mostly are delivered to lysosomes enabling degradation of membrane proteins, such as stimulated growth factor receptors, lysosomal enzymes and lipids. The sequence is that of Charged multivesicular body protein 2b (CHMP2B) from Gallus gallus (Chicken).